Here is a 609-residue protein sequence, read N- to C-terminus: Protein tesmin/TSO1-like CXC 3 (609 aa).

Residues 69 to 84 (ESRFRSQKDVSASKEV) show a composition bias toward basic and acidic residues. 4 disordered regions span residues 69-102 (ESRF…YKND), 307-328 (PISP…SSCK), 457-477 (LFEQ…KTQQ), and 569-609 (NSKR…TPHH). Residues 326-451 (SCKRCNCKKS…RCEGCKNAFG (126 aa)) enclose the CRC domain. The segment covering 466–477 (TSGTPGTKKTQQ) has biased composition (polar residues).

It belongs to the lin-54 family. Ubiquitous but expressed mostly in flowers and at significant levels in leaves. Detected with highest levels in developing ovules and microspores, and in petals.

Its subcellular location is the nucleus. Its function is as follows. Plays a role in development of both male and female reproductive tissues. The chain is Protein tesmin/TSO1-like CXC 3 (TCX3) from Arabidopsis thaliana (Mouse-ear cress).